A 98-amino-acid polypeptide reads, in one-letter code: Lipolysis-activating peptide 1-alpha chain (98 aa).

Positions 1 to 22 (MMKFVLFGMIVILFSLMGSIRG) are cleaved as a signal peptide. In terms of domain architecture, LCN-type CS-alpha/beta spans 26 to 89 (PGNYPTNAYG…IWNAVKNHCT (64 aa)). 3 cysteine pairs are disulfide-bonded: Cys-40–Cys-63, Cys-49–Cys-68, and Cys-53–Cys-70. Asn-96 bears the Asparagine amide mark.

The protein belongs to the long (3 C-C) scorpion toxin superfamily. Monomer (edited version) and heterodimer (non-edited version) of this alpha chain and a beta chain (AC Q95P90). Expressed by the venom gland.

Its subcellular location is the secreted. Its function is as follows. The heterodimer non-edited LVP1 induces lipolysis in rat adipocytes. Induction of lipolysis by LVP1 appears to be mediated through the beta-2 adrenergic receptor pathway (ADRB2). Functionally, the edited BmKBTx, similar to beta-toxins, may modulate voltage-gated sodium channels (Nav) and may block voltage-gated potassium channels (Kv). Seems to be a rare component in the venom. The chain is Lipolysis-activating peptide 1-alpha chain (LVP1a) from Olivierus martensii (Manchurian scorpion).